A 1415-amino-acid chain; its full sequence is MVELGFPAYGPAIEKRVRPLYKALCDWRAAVTLAARRRFQQLRCNANMDDDGQPMFPPLPVPDWNNPSTDWRPSPPRSGPKKDFCGDLPAPLTSGPRLTTPSSGRMSELPHTTSSPRSSPRPRGPETSPSNEHIIISPPRNPPSNTTHRNVGHVSRSPSSSSSSSSSSSPSSSSLIVLSSPSSSRSPSPSPPRPRADSSSRPRRGRGSNRGGRSGPQSKGRKASPRTRKLEDEDYLPQETANRRGGGRPRGRPPKSGRAVQRNDIQVTSSSGLADTSPYDLCGSVWWEVPLPPPGRCWFGGLGGHRQALTDSPEIVEAIHRFNTSHGPVPVYVEEMKDYAKQYDALVNSLFHKSMKVNPLNWMHHGKLSPADAALNHIYVQKFQSSYDSPGAAVTGTVNRCIPHIAGAMKERKLLWAFPHIAASIAMTRRYCKDQKTFLFRSLKKAYASMAFPDNSSETEKGISSKPSTSPSVLITTSTQTTASPHAPKIDVTAIHGRVYQSVVDLSRCLADGSLDDPEFSFAGCTRPDCCVEEFDAARPLEELADACVLACDSVVAALLCGPDGPHRVAKMLSFYDSRITPHVPDSQQWEKCRILLVSWYNELSDLRAAVYGAYGNTPTSQHLDERALAARVVSLIAETIGPLVRQDPDRAWVRMGSRDITSLLLRDWRGTNDGDPGLVKAKHLRRTAELLNDGRSSKGTYGVFAPPRRPDQLFRGPGRPRRSTSSSQSASDKSPIKSTHRHTSDPIPISTPRPERDPAGTPHENTMSGPVQPAANGHSCSSTPTPAKKGNKTSSDTISLKDPTKTRIKASAKAQTDETLPETSTAHPSAMDQSSSLERKTLYTGPAVSSKERRRSAQSSTPSDIGGVSRKRKSAPEQYKQGLQTPLPMPEPSVGQTLLDPTTTTHDILSSSLPNRSCSSSPSPSKRPYHPSCYSPTDIMTGALVGPRGRQDRAAFRQFPVGTVIGQTPPQSVLNAYCPNGAFVELVEFARIPEPWQEVLRYSPEAMADIARVANALPGKYNSNEIITSAASEAFHTATSKLRARTAWMRYQQESPDDVSIVVLYSPLPGEHLFCVPAPDTPPGGLKFDNKRGGLSFLLAAFSNRLCLPKSSAWAGRWKAAPDISPLTRMGVLFLSTEDLGYQGAVEYLQRQCMKRKKKLIIMDTVEDRYRLPNGPCIIEEATRYMKCIISPRSQCCVRWPGLRDFGTTIITSRDVVGPLTLMDLEQYYYCEIGIEDSTINLCCTGNVRYTVETRLEDVSCVPTTPLFYFAAVKHVRPDFLCGETYSNRAARKWGLCAPLRPIYVIESKMNAIVSPSFLHPTARNLCRSVILPPDPEARPVVVHIPEGTCSALAEDMVASIRSSCITWGQHEEGGPETTAQENSDIRAMKVRPPTKPPYMSPLNIGNRDTTFTD.

Disordered stretches follow at residues 48–272 (MDDD…SSSG), 454–480 (DNSS…TSTQ), 691–935 (LLND…PSCY), and 1371–1415 (QHEE…TFTD). Residues 96–105 (PRLTTPSSGR) are compositionally biased toward polar residues. Over residues 125-187 (PETSPSNEHI…LSSPSSSRSP (63 aa)) the composition is skewed to low complexity. Residues 245-255 (GGGRPRGRPPK) show a composition bias toward basic residues. 2 stretches are compositionally biased toward polar residues: residues 263–272 (NDIQVTSSSG) and 465–480 (SKPS…TSTQ). Over residues 724 to 738 (STSSSQSASDKSPIK) the composition is skewed to low complexity. 2 stretches are compositionally biased toward polar residues: residues 814–837 (KAQT…QSSS) and 895–910 (VGQT…HDIL). Residues 911–933 (SSSLPNRSCSSSPSPSKRPYHPS) are compositionally biased toward low complexity.

This sequence belongs to the herpesviridae ICP4 family. A long stretch of serine residues may be a major site of phosphorylation.

The protein localises to the host nucleus. In terms of biological role, this IE protein is a multifunctional protein capable of migrating to the nucleus, binding to DNA, trans-activating other viral genes, and autoregulating its own synthesis. It is required for the switch from immediate-early to early mode of gene expression. This is Major viral transcription factor ICP4 homolog (ICP4) from Gallus gallus (Chicken).